Consider the following 89-residue polypeptide: Nitrogen regulatory protein (89 aa).

The 84-residue stretch at Thr6 to Asp89 folds into the PTS EIIA type-2 domain. Catalysis depends on His68, which acts as the Tele-phosphohistidine intermediate.

It localises to the cytoplasm. Its function is as follows. Seems to have a role in regulating nitrogen assimilation. This chain is Nitrogen regulatory protein (ptsN), found in Pseudomonas putida (Arthrobacter siderocapsulatus).